The sequence spans 498 residues: ATP synthase subunit beta, chloroplastic (498 aa).

Position 172–179 (172–179 (GGAGVGKT)) interacts with ATP.

Belongs to the ATPase alpha/beta chains family. F-type ATPases have 2 components, CF(1) - the catalytic core - and CF(0) - the membrane proton channel. CF(1) has five subunits: alpha(3), beta(3), gamma(1), delta(1), epsilon(1). CF(0) has four main subunits: a(1), b(1), b'(1) and c(9-12).

It is found in the plastid. Its subcellular location is the chloroplast thylakoid membrane. It catalyses the reaction ATP + H2O + 4 H(+)(in) = ADP + phosphate + 5 H(+)(out). Produces ATP from ADP in the presence of a proton gradient across the membrane. The catalytic sites are hosted primarily by the beta subunits. The polypeptide is ATP synthase subunit beta, chloroplastic (Agapanthus africanus (Lily of the Nile)).